Consider the following 294-residue polypeptide: Probable cobalamin biosynthesis protein CobD (294 aa).

4 helical membrane-spanning segments follow: residues 52–72 (AGLLTALVVITFAFLLSIVPF), 73–93 (YAPFPLNYFLAAYLLKSSFAI), 145–165 (DSVVAPLFYFLLFGLQGAVIY), and 268–288 (IYWLVVTGWVIVVVLLLATGV).

Belongs to the CobD/CbiB family.

It is found in the cell membrane. The protein operates within cofactor biosynthesis; adenosylcobalamin biosynthesis. In terms of biological role, converts cobyric acid to cobinamide by the addition of aminopropanol on the F carboxylic group. The protein is Probable cobalamin biosynthesis protein CobD of Thermococcus kodakarensis (strain ATCC BAA-918 / JCM 12380 / KOD1) (Pyrococcus kodakaraensis (strain KOD1)).